Reading from the N-terminus, the 244-residue chain is Protein crossbronx (244 aa).

The 157-residue stretch at 20-176 folds into the UBC core domain; that stretch reads QQEYKILAEY…VQKNIKESKE (157 aa). Residues 209-244 form a disordered region; that stretch reads AGRSKQTEPSAQQANGGHATGLSWVKEGEFKPLSIE.

The protein belongs to the ubiquitin-conjugating enzyme family. FTS subfamily.

This is Protein crossbronx (cbx) from Drosophila erecta (Fruit fly).